Consider the following 611-residue polypeptide: Beta-hexosaminidase (611 aa).

This sequence belongs to the glycosyl hydrolase 20 family. Homodimer.

The protein localises to the periplasm. The enzyme catalyses Hydrolysis of terminal non-reducing N-acetyl-D-hexosamine residues in N-acetyl-beta-D-hexosaminides.. It functions in the pathway glycan degradation; chitin degradation. Its activity is regulated as follows. Inhibited by mercuric ions, PNP-beta-Glc, PNP-beta-Gal, PNP-alpha-GlcNAc, and PNP-beta-S-GlcNAc. Functionally, hydrolyzes aryl-N-acetyl-beta-D-glucosaminide (aryl-beta-GlcNAc), aryl-beta-GalNAc and chitin oligosaccharides. Can hydrolyze rapidly the artificial substrates p-nitrophenyl-N-acetyl-beta-D-glucosaminide (PNP-beta-GlcNAc) and 4-methylumbelliferyl-beta-GlcNAc, and is slightly active on p-nitrophenyl-beta-GalNAc. This enzyme is not processive, i.e. when it hydrolyzes (GlcNAc)n, both products, (Glc-NAc)n-1 and the terminal GlcNAc, are released before the enzyme attacks a second molecule of (GlcNAc)n or (GlcNAc)n-1. The chain is Beta-hexosaminidase from Vibrio furnissii.